The chain runs to 484 residues: Protein nucleotidyltransferase YdiU (484 aa).

Residues Gly-81, Gly-83, Arg-84, Lys-103, Asp-115, Gly-116, Arg-166, and Arg-173 each coordinate ATP. Asp-244 serves as the catalytic Proton acceptor. The Mg(2+) site is built by Asn-245 and Asp-254. An ATP-binding site is contributed by Asp-254.

The protein belongs to the SELO family. Requires Mg(2+) as cofactor. Mn(2+) is required as a cofactor.

The catalysed reaction is L-seryl-[protein] + ATP = 3-O-(5'-adenylyl)-L-seryl-[protein] + diphosphate. It carries out the reaction L-threonyl-[protein] + ATP = 3-O-(5'-adenylyl)-L-threonyl-[protein] + diphosphate. It catalyses the reaction L-tyrosyl-[protein] + ATP = O-(5'-adenylyl)-L-tyrosyl-[protein] + diphosphate. The enzyme catalyses L-histidyl-[protein] + UTP = N(tele)-(5'-uridylyl)-L-histidyl-[protein] + diphosphate. The catalysed reaction is L-seryl-[protein] + UTP = O-(5'-uridylyl)-L-seryl-[protein] + diphosphate. It carries out the reaction L-tyrosyl-[protein] + UTP = O-(5'-uridylyl)-L-tyrosyl-[protein] + diphosphate. Its function is as follows. Nucleotidyltransferase involved in the post-translational modification of proteins. It can catalyze the addition of adenosine monophosphate (AMP) or uridine monophosphate (UMP) to a protein, resulting in modifications known as AMPylation and UMPylation. This Shewanella baltica (strain OS195) protein is Protein nucleotidyltransferase YdiU.